Here is a 748-residue protein sequence, read N- to C-terminus: Putative transmembrane protein ORF88 (748 aa).

A signal peptide spans 1–20 (MIIMKSIILLLAWFLTKTQA). Residues 21–723 (NMLTESLYLS…LNLAPFKTLS (703 aa)) are Extracellular-facing. N-linked (GlcNAc...) asparagine; by host glycans are attached at residues asparagine 55, asparagine 78, asparagine 99, asparagine 152, asparagine 189, asparagine 390, asparagine 467, and asparagine 499. A disordered region spans residues 531-574 (LTFDSPPPPPTTTQAPPPPPTTTQAPPPPPTTTQAPPPPIVINT). Residues 535–570 (SPPPPPTTTQAPPPPPTTTQAPPPPPTTTQAPPPPI) show a composition bias toward pro residues. 5 N-linked (GlcNAc...) asparagine; by host glycosylation sites follow: asparagine 573, asparagine 584, asparagine 599, asparagine 612, and asparagine 617. The interval 650–680 (PSIGRAPIPPPDVPVEPPRSIPTTNAPSPEE) is disordered. The segment covering 656 to 669 (PIPPPDVPVEPPRS) has biased composition (pro residues). A helical membrane pass occupies residues 724–744 (YAGIGVVSFALLFTILVVCLI). Residues 745–748 (KFSI) lie on the Cytoplasmic side of the membrane.

The protein resides in the host membrane. This is Putative transmembrane protein ORF88 from Magallana gigas (Pacific oyster).